A 333-amino-acid polypeptide reads, in one-letter code: Sphingomyelinase C (333 aa).

A signal peptide spans 1 to 27; it reads MKGKLLKGVLSFGIGLGVLYGGSSVQA. Cys150 and Cys186 are joined by a disulfide.

It belongs to the neutral sphingomyelinase family. Requires Mg(2+) as cofactor.

The protein resides in the secreted. It catalyses the reaction a sphingomyelin + H2O = phosphocholine + an N-acylsphing-4-enine + H(+). With respect to regulation, activated by cobalt and manganese ions. Functionally, required, with sphingomyelinase, to effect target cell lysis (hemolysis). The protein is Sphingomyelinase C (sph) of Bacillus cereus.